The following is a 359-amino-acid chain: 3-dehydroquinate synthase (359 aa).

NAD(+) contacts are provided by residues 71–76, 104–108, 128–129, Lys141, Lys150, and 168–171; these read DGEQYK, GVVGD, TT, and TLNT. The Zn(2+) site is built by Glu183, His247, and His264.

This sequence belongs to the sugar phosphate cyclases superfamily. Dehydroquinate synthase family. The cofactor is Co(2+). Requires Zn(2+) as cofactor. NAD(+) serves as cofactor.

It localises to the cytoplasm. It catalyses the reaction 7-phospho-2-dehydro-3-deoxy-D-arabino-heptonate = 3-dehydroquinate + phosphate. Its pathway is metabolic intermediate biosynthesis; chorismate biosynthesis; chorismate from D-erythrose 4-phosphate and phosphoenolpyruvate: step 2/7. Its function is as follows. Catalyzes the conversion of 3-deoxy-D-arabino-heptulosonate 7-phosphate (DAHP) to dehydroquinate (DHQ). In Coxiella burnetii (strain Dugway 5J108-111), this protein is 3-dehydroquinate synthase.